The chain runs to 410 residues: NADH-quinone oxidoreductase subunit H (410 aa).

A run of 9 helical transmembrane segments spans residues 16-36, 84-104, 124-144, 165-185, 198-218, 260-280, 288-308, 320-340, and 353-373; these read LILA…LAAI, WIYL…FAVI, LPVA…GIVL, VISY…YAGT, VWFI…MVGE, VSAL…PISI, WWPL…FMWL, FMRL…AIVA, and WVTA…LLAW. Residues 384 to 410 are disordered; the sequence is SHSPPAQSSDHGAFPVPPLPVKEPADA.

This sequence belongs to the complex I subunit 1 family. NDH-1 is composed of 14 different subunits. Subunits NuoA, H, J, K, L, M, N constitute the membrane sector of the complex.

Its subcellular location is the cell membrane. It catalyses the reaction a quinone + NADH + 5 H(+)(in) = a quinol + NAD(+) + 4 H(+)(out). NDH-1 shuttles electrons from NADH, via FMN and iron-sulfur (Fe-S) centers, to quinones in the respiratory chain. The immediate electron acceptor for the enzyme in this species is believed to be menaquinone. Couples the redox reaction to proton translocation (for every two electrons transferred, four hydrogen ions are translocated across the cytoplasmic membrane), and thus conserves the redox energy in a proton gradient. This chain is NADH-quinone oxidoreductase subunit H, found in Mycolicibacterium gilvum (strain PYR-GCK) (Mycobacterium gilvum (strain PYR-GCK)).